The primary structure comprises 357 residues: Protein-glutamate methylesterase/protein-glutamine glutaminase (357 aa).

Residues 3 to 120 (RVIVVDDSAF…LASMDLAALS (118 aa)) form the Response regulatory domain. D54 is modified (4-aspartylphosphate). Residues 165 to 357 (ERSRRDIIAI…AERVASALYK (193 aa)) form the CheB-type methylesterase domain. Active-site residues include S177, H204, and D300.

The protein belongs to the CheB family. Phosphorylated by CheA. Phosphorylation of the N-terminal regulatory domain activates the methylesterase activity.

The protein localises to the cytoplasm. The enzyme catalyses [protein]-L-glutamate 5-O-methyl ester + H2O = L-glutamyl-[protein] + methanol + H(+). It catalyses the reaction L-glutaminyl-[protein] + H2O = L-glutamyl-[protein] + NH4(+). Functionally, involved in chemotaxis. Part of a chemotaxis signal transduction system that modulates chemotaxis in response to various stimuli. Catalyzes the demethylation of specific methylglutamate residues introduced into the chemoreceptors (methyl-accepting chemotaxis proteins or MCP) by CheR. Also mediates the irreversible deamidation of specific glutamine residues to glutamic acid. This Lawsonia intracellularis (strain PHE/MN1-00) protein is Protein-glutamate methylesterase/protein-glutamine glutaminase.